A 127-amino-acid chain; its full sequence is NADPH-dependent 7-cyano-7-deazaguanine reductase (127 aa).

Residue Cys40 is the Thioimide intermediate of the active site. The active-site Proton donor is the Asp47. Residues 62–64 and 81–82 contribute to the substrate site; these read VEL and HE.

The protein belongs to the GTP cyclohydrolase I family. QueF type 1 subfamily.

The protein resides in the cytoplasm. It carries out the reaction 7-aminomethyl-7-carbaguanine + 2 NADP(+) = 7-cyano-7-deazaguanine + 2 NADPH + 3 H(+). The protein operates within tRNA modification; tRNA-queuosine biosynthesis. In terms of biological role, catalyzes the NADPH-dependent reduction of 7-cyano-7-deazaguanine (preQ0) to 7-aminomethyl-7-deazaguanine (preQ1). In Campylobacter lari (strain RM2100 / D67 / ATCC BAA-1060), this protein is NADPH-dependent 7-cyano-7-deazaguanine reductase.